The primary structure comprises 202 residues: Recombination protein RecR (202 aa).

The C4-type zinc finger occupies 56 to 71 (CRVCGNLDSADPCSVC). In terms of domain architecture, Toprim spans 79–179 (GLICVVESVG…SVTRLAQGIP (101 aa)).

The protein belongs to the RecR family.

May play a role in DNA repair. It seems to be involved in an RecBC-independent recombinational process of DNA repair. It may act with RecF and RecO. This Granulibacter bethesdensis (strain ATCC BAA-1260 / CGDNIH1) protein is Recombination protein RecR.